Reading from the N-terminus, the 200-residue chain is Diadenylate cyclase (200 aa).

A helical membrane pass occupies residues 5–25 (ILLFITLIFLLLLFVFLIAFA). The 158-residue stretch at 28–185 (NKRVRNYVVR…KGVIKTLSSN (158 aa)) folds into the DAC domain.

The protein belongs to the adenylate cyclase family. DacB/CdaS subfamily. Probably oligomerizes.

It is found in the cell membrane. The catalysed reaction is 2 ATP = 3',3'-c-di-AMP + 2 diphosphate. In terms of biological role, catalyzes the condensation of 2 ATP molecules into cyclic di-AMP (c-di-AMP), a second messenger used to regulate differing processes in different bacteria. This is Diadenylate cyclase from Mycoplasma genitalium (strain ATCC 33530 / DSM 19775 / NCTC 10195 / G37) (Mycoplasmoides genitalium).